The primary structure comprises 312 residues: MEFILSLIGSLLLIICVLVSVAFLTLLERKVLGYIQIRKGPNKVGLMGIPQPFCDAIKLFTKEQTYPLLSNYLSYYISPIFSLFLSLFVWMCMPFFVKLYSFNLGGLFFLCCTSLGVYTVMVAGWSSNSNYALLGGLRAVAQTISYEVSLALILLSFVFLIGSYNMVYFFYYQIYVWFLIILFPMALVWLTISLAETNRTPFDFAEGESELVSGFNVEYSSGGFALIFMAEYASILFMSMLFCVIFLGCDVFNLLFYVKLTFISFIFIWARGTLPRFRYDKLMYLAWKCFLSFSLNYLLFFIGFKILLFSLL.

The next 8 membrane-spanning stretches (helical) occupy residues 3–23, 77–97, 104–124, 150–170, 174–194, 226–246, 250–270, and 289–309; these read FILS…SVAF, ISPI…PFFV, LGGL…MVAG, LALI…VYFF, IYVW…TISL, LIFM…CVIF, DVFN…FIWA, and CFLS…ILLF.

This sequence belongs to the complex I subunit 1 family.

Its subcellular location is the mitochondrion inner membrane. The catalysed reaction is a ubiquinone + NADH + 5 H(+)(in) = a ubiquinol + NAD(+) + 4 H(+)(out). In terms of biological role, core subunit of the mitochondrial membrane respiratory chain NADH dehydrogenase (Complex I) that is believed to belong to the minimal assembly required for catalysis. Complex I functions in the transfer of electrons from NADH to the respiratory chain. The immediate electron acceptor for the enzyme is believed to be ubiquinone. This Drosophila subobscura (Fruit fly) protein is NADH-ubiquinone oxidoreductase chain 1 (mt:ND1).